A 498-amino-acid chain; its full sequence is Ribulose bisphosphate carboxylase large chain (498 aa).

Positions 1-2 are excised as a propeptide; the sequence is MS. N-acetylproline is present on P3. Position 14 is an N6,N6,N6-trimethyllysine (K14). Positions 123 and 173 each coordinate substrate. K175 acts as the Proton acceptor in catalysis. A substrate-binding site is contributed by K177. Positions 201, 203, and 204 each coordinate Mg(2+). K201 bears the N6-carboxylysine mark. H294 functions as the Proton acceptor in the catalytic mechanism. Substrate-binding residues include R295, H327, and S379. A disordered region spans residues 471–498; sequence PVDTLDPNDKKQRDNEDTLADKLFGDKG.

This sequence belongs to the RuBisCO large chain family. Type I subfamily. In terms of assembly, heterohexadecamer of 8 large chains and 8 small chains; disulfide-linked. The disulfide link is formed within the large subunit homodimers. The cofactor is Mg(2+). In terms of processing, the disulfide bond which can form in the large chain dimeric partners within the hexadecamer appears to be associated with oxidative stress and protein turnover.

It is found in the plastid. The catalysed reaction is 2 (2R)-3-phosphoglycerate + 2 H(+) = D-ribulose 1,5-bisphosphate + CO2 + H2O. It carries out the reaction D-ribulose 1,5-bisphosphate + O2 = 2-phosphoglycolate + (2R)-3-phosphoglycerate + 2 H(+). RuBisCO catalyzes two reactions: the carboxylation of D-ribulose 1,5-bisphosphate, the primary event in carbon dioxide fixation, as well as the oxidative fragmentation of the pentose substrate in the photorespiration process. Both reactions occur simultaneously and in competition at the same active site. The chain is Ribulose bisphosphate carboxylase large chain (rbcL) from Cuscuta reflexa (Southern Asian dodder).